The chain runs to 813 residues: Striatin-interacting protein 1 homolog (813 aa).

Disordered regions lie at residues 1–41 (MDGV…SEAP) and 307–379 (RAAS…RDEV). The span at 9–18 (NNKQKQNQML) shows a compositional bias: polar residues. Positions 22-35 (MRGEFTRNQRKDSE) are enriched in basic and acidic residues. Low complexity predominate over residues 307-316 (RAASPPASAS). Residue Ser-310 is modified to Phosphoserine. The segment covering 331–352 (KALIKQDNLDTFNEKDPYKADD) has biased composition (basic and acidic residues). Positions 353-367 (SHEDEEENDDNDNSL) are enriched in acidic residues.

The protein belongs to the STRIP family. As to quaternary structure, part of the core of STRIPAK complexes composed of PP2A catalytic and scaffolding subunits, the striatins (PP2A regulatory subunits), the striatin-associated proteins MOB4, STRIP1 and STRIP2, PDCD10 and members of the STE20 kinases, such as STK24 and STK26.

It localises to the cytoplasm. Functionally, plays a role in the regulation of cell morphology and cytoskeletal organization. Required in the cortical actin filament dynamics and cell shape. Part of the striatin-interacting phosphatase and kinase (STRIPAK) complexes. STRIPAK complexes have critical roles in protein (de)phosphorylation and are regulators of multiple signaling pathways including Hippo, MAPK, nuclear receptor and cytoskeleton remodeling. Different types of STRIPAK complexes are involved in a variety of biological processes such as cell growth, differentiation, apoptosis, metabolism and immune regulation. In Danio rerio (Zebrafish), this protein is Striatin-interacting protein 1 homolog (strip1).